Here is a 459-residue protein sequence, read N- to C-terminus: tRNA modification GTPase MnmE (459 aa).

(6S)-5-formyl-5,6,7,8-tetrahydrofolate is bound by residues R20, E85, and R124. Residues 221–380 enclose the TrmE-type G domain; it reads GLSTVIIGRP…LEMAIQSLFF (160 aa). N231 is a K(+) binding site. GTP contacts are provided by residues 231 to 236, 250 to 256, and 275 to 278; these read NVGKSS, TDIPGTT, and DTAG. S235 contributes to the Mg(2+) binding site. K(+) contacts are provided by T250, I252, and T255. Position 256 (T256) interacts with Mg(2+). K459 provides a ligand contact to (6S)-5-formyl-5,6,7,8-tetrahydrofolate.

It belongs to the TRAFAC class TrmE-Era-EngA-EngB-Septin-like GTPase superfamily. TrmE GTPase family. In terms of assembly, homodimer. Heterotetramer of two MnmE and two MnmG subunits. K(+) is required as a cofactor.

The protein localises to the cytoplasm. In terms of biological role, exhibits a very high intrinsic GTPase hydrolysis rate. Involved in the addition of a carboxymethylaminomethyl (cmnm) group at the wobble position (U34) of certain tRNAs, forming tRNA-cmnm(5)s(2)U34. This is tRNA modification GTPase MnmE from Bacillus pumilus (strain SAFR-032).